A 1219-amino-acid polypeptide reads, in one-letter code: DNA ligase 4 (1219 aa).

The ATP site is built by glutamate 251, lysine 253, arginine 258, arginine 273, glutamate 303, phenylalanine 342, glutamate 418, lysine 423, arginine 434, lysine 440, and lysine 442. The N6-AMP-lysine intermediate role is filled by lysine 253. Mg(2+) is bound at residue glutamate 303. Glutamate 418 contributes to the Mg(2+) binding site. The tract at residues 604–632 is disordered; it reads NGTTQKQKESESTQDNPKVNKSSKRGEKK. BRCT domains lie at 651–739 and 807–909; these read GKTS…PKYF and VYFY…VYTL. Disordered stretches follow at residues 914 to 1126 and 1146 to 1197; these read MEES…MDMK and IPSQ…SDVV. Positions 932-960 are enriched in polar residues; sequence VASQGSAQTKEPASSKIAITSSRGRSNTR. Basic residues predominate over residues 1042–1051; the sequence is QRSRRGKKAA. The segment covering 1056 to 1065 has biased composition (acidic residues); that stretch reads DESDENDELD. Composition is skewed to basic and acidic residues over residues 1084-1096 and 1117-1126; these read VENE…DIAK and RNAKTEMDMK. The segment covering 1148–1159 has biased composition (polar residues); it reads SQKTTETSNRTT.

Belongs to the ATP-dependent DNA ligase family. Interacts with XRCC4 via its tandem BRCT domains. Interacts with POLL. The cofactor is Mg(2+). As to expression, widely expressed, with higher levels in young flowers and roots.

Its subcellular location is the nucleus. The catalysed reaction is ATP + (deoxyribonucleotide)n-3'-hydroxyl + 5'-phospho-(deoxyribonucleotide)m = (deoxyribonucleotide)n+m + AMP + diphosphate.. In terms of biological role, DNA ligase involved in DNA non-homologous end joining (NHEJ); required for double-strand break (DSB) repair. May be involved for T-DNA integration even if not absolutely required. Seems to be dispensable under normal growth conditions. The polypeptide is DNA ligase 4 (LIG4) (Arabidopsis thaliana (Mouse-ear cress)).